The primary structure comprises 403 residues: G2/mitotic-specific cyclin-B1 (403 aa).

This sequence belongs to the cyclin family. Cyclin AB subfamily. In terms of assembly, interacts with the CDC2 protein kinase to form a serine/threonine kinase holoenzyme complex also known as maturation promoting factor (MPF). The cyclin subunit imparts substrate specificity to the complex.

Essential for the control of the cell cycle at the G2/M (mitosis) transition. This Anguilla japonica (Japanese eel) protein is G2/mitotic-specific cyclin-B1 (ccnb1).